A 184-amino-acid polypeptide reads, in one-letter code: Probable N-acetyltransferase san (184 aa).

Residues 6-155 (IELGDVTPHN…DAHVLQKTLR (150 aa)) enclose the N-acetyltransferase domain. Tyr-31 contacts substrate. N6-acetyllysine; by autocatalysis is present on Lys-47. The active site involves Tyr-73. Met-75 is a substrate binding site. 77–90 (LGCLSPYRRLGIGT) is an acetyl-CoA binding site. His-112 is an active-site residue. A CoA-binding site is contributed by 117-126 (NNGAIEFYKK). A substrate region spans residues 138-141 (YYKR). Positions 157–174 (TAPNSNSTATSTTANSNS) are enriched in low complexity. The tract at residues 157–176 (TAPNSNSTATSTTANSNSRS) is disordered.

It belongs to the acetyltransferase family. Component of an acetyltransferase complex, at least composed of san, Ard1 and Nat1. Autoacetylated.

The protein localises to the cytoplasm. It catalyses the reaction N-terminal L-methionyl-L-alanyl-[protein] + acetyl-CoA = N-terminal N(alpha)-acetyl-L-methionyl-L-alanyl-[protein] + CoA + H(+). The catalysed reaction is N-terminal L-methionyl-L-seryl-[protein] + acetyl-CoA = N-terminal N(alpha)-acetyl-L-methionyl-L-seryl-[protein] + CoA + H(+). The enzyme catalyses N-terminal L-methionyl-L-valyl-[protein] + acetyl-CoA = N-terminal N(alpha)-acetyl-L-methionyl-L-valyl-[protein] + CoA + H(+). It carries out the reaction N-terminal L-methionyl-L-threonyl-[protein] + acetyl-CoA = N-terminal N(alpha)-acetyl-L-methionyl-L-threonyl-[protein] + CoA + H(+). It catalyses the reaction N-terminal L-methionyl-L-lysyl-[protein] + acetyl-CoA = N-terminal N(alpha)-acetyl-L-methionyl-L-lysyl-[protein] + CoA + H(+). The catalysed reaction is N-terminal L-methionyl-L-leucyl-[protein] + acetyl-CoA = N-terminal N(alpha)-acetyl-L-methionyl-L-leucyl-[protein] + CoA + H(+). The enzyme catalyses N-terminal L-methionyl-L-phenylalanyl-[protein] + acetyl-CoA = N-terminal N(alpha)-acetyl-L-methionyl-L-phenylalanyl-[protein] + CoA + H(+). It carries out the reaction N-terminal L-methionyl-L-tyrosyl-[protein] + acetyl-CoA = N-terminal N(alpha)-acetyl-L-methionyl-L-tyrosyl-[protein] + CoA + H(+). Functionally, N-alpha-acetyltransferase that acetylates the N-terminus of proteins that retain their initiating methionine. Has a broad substrate specificity: able to acetylate the initiator methionine of most peptides. Also displays N-epsilon-acetyltransferase activity by mediating acetylation of the side chain of specific lysines on proteins. Autoacetylates. Required for the establishment of sister chromatid cohesion and couple the processes of cohesion and DNA replication to ensure that only sister chromatids become paired together. Required for the interaction between Scc1/vtd and SMC3, possibly by mediating N-terminal acetylation of Scc1/vtd. Its function is as follows. (Microbial infection) Required for optimal replication of E.chaffeensis in the immune tissues, hemocytes, and fat body. The chain is Probable N-acetyltransferase san (san) from Drosophila melanogaster (Fruit fly).